Consider the following 1375-residue polypeptide: BNI1-related protein 1 (1375 aa).

Positions 94-490 (CMPQDASLVE…YLIDSFQVST (397 aa)) constitute a GBD/FH3 domain. The stretch at 520–601 (QSDEIARRAV…ITTHQRLYDQ (82 aa)) forms a coiled coil. Residue serine 621 is modified to Phosphoserine. An FH1 domain is found at 659 to 851 (SSYLTDANNE…LVTPPAPPLP (193 aa)). Residues 661–684 (YLTDANNENESQNESEDKSKDSLF) are disordered. Serine 751 carries the post-translational modification Phosphoserine. 3 disordered regions span residues 764 to 785 (KLPQLPPPPPPPPPPPLPQSLL), 817 to 839 (AVPPPPPPPPLPESLSMNKGPSN), and 1285 to 1309 (KSLLDMRTSSNKKSNGSDENDGEKV). Pro residues-rich tracts occupy residues 767 to 781 (QLPPPPPPPPPPPLP) and 818 to 828 (VPPPPPPPPLP). The region spanning 868–1290 (DLKPPPTEKR…YEQRKSLLDM (423 aa)) is the FH2 domain. The region spanning 1302–1336 (DENDGEKVNRDAVDLLISKLREVKKDPEPLRRRKS) is the DAD domain.

It belongs to the formin homology family. BNI1 subfamily. In terms of assembly, interacts with profilin at the FH1 domain.

Functionally, may organize microtubules by mediating spindle positioning and movement in the budding process. Potential target of the RHO family members. In Saccharomyces cerevisiae (strain ATCC 204508 / S288c) (Baker's yeast), this protein is BNI1-related protein 1 (BNR1).